We begin with the raw amino-acid sequence, 405 residues long: Argininosuccinate synthase (405 aa).

12–20 contributes to the ATP binding site; the sequence is AYSGGLDTS. L-citrulline-binding residues include tyrosine 92 and serine 97. Position 122 (glycine 122) interacts with ATP. L-aspartate contacts are provided by threonine 124, asparagine 128, and aspartate 129. Residue asparagine 128 participates in L-citrulline binding. The L-citrulline site is built by arginine 132, serine 181, serine 190, glutamate 266, and tyrosine 278.

Belongs to the argininosuccinate synthase family. Type 1 subfamily. Homotetramer.

It is found in the cytoplasm. The catalysed reaction is L-citrulline + L-aspartate + ATP = 2-(N(omega)-L-arginino)succinate + AMP + diphosphate + H(+). It functions in the pathway amino-acid biosynthesis; L-arginine biosynthesis; L-arginine from L-ornithine and carbamoyl phosphate: step 2/3. The sequence is that of Argininosuccinate synthase from Cronobacter sakazakii (strain ATCC BAA-894) (Enterobacter sakazakii).